The following is a 370-amino-acid chain: Doublesex- and mab-3-related transcription factor C2 (370 aa).

The segment at 1 to 38 (MDPSETAALHHCSADSSPADEARVPQSTELIPRRPVSR) is disordered. A DNA-binding region (DM) is located at residues 42–89 (CARCRNHGVTAHLKGHKRLCLFQACECHKCVLILERRRVMAAQVALRR). The segment at 334-356 (APPGGRGFQPVGPPLRPSPGSSV) is disordered.

Belongs to the DMRT family. In terms of tissue distribution, expressed in testis. Highly expressed in ovary.

Its subcellular location is the nucleus. In terms of biological role, may be involved in sexual development. The protein is Doublesex- and mab-3-related transcription factor C2 (Dmrtc2) of Mus musculus (Mouse).